Consider the following 1347-residue polypeptide: Protein HUA2-LIKE 3 (1347 aa).

In terms of domain architecture, PWWP spans valine 24–glutamate 81. Disordered regions lie at residues lysine 110 to leucine 137, aspartate 251 to lysine 320, and aspartate 383 to glutamate 402. Residues threonine 127–leucine 137 are compositionally biased toward polar residues. Positions valine 302–glycine 314 are enriched in low complexity. The segment covering asparagine 390–glutamate 402 has biased composition (basic and acidic residues). The CID domain occupies aspartate 845 to serine 986. 4 disordered regions span residues arginine 1037–serine 1069, threonine 1121–glutamine 1140, tyrosine 1147–methionine 1223, and arginine 1259–arginine 1347. Acidic residues predominate over residues aspartate 1038 to aspartate 1049. Positions threonine 1054–serine 1069 are enriched in basic and acidic residues. Residues proline 1181–lysine 1191 show a composition bias toward polar residues. Residues serine 1208–serine 1217 show a composition bias toward pro residues. Residues arginine 1259–arginine 1272 show a composition bias toward basic and acidic residues.

In terms of tissue distribution, expressed throughout young primordia, and vegetative and reproductive apices.

It is found in the nucleus. Probable transcription factor that acts with partial redundancy with HULK1 and HULK2. Plays diverse and essential roles in the control of plant development, physiology and flowering time. This Arabidopsis thaliana (Mouse-ear cress) protein is Protein HUA2-LIKE 3.